The chain runs to 340 residues: Phosphoribosylformylglycinamidine cyclo-ligase (340 aa).

This sequence belongs to the AIR synthase family.

The protein resides in the cytoplasm. It carries out the reaction 2-formamido-N(1)-(5-O-phospho-beta-D-ribosyl)acetamidine + ATP = 5-amino-1-(5-phospho-beta-D-ribosyl)imidazole + ADP + phosphate + H(+). Its pathway is purine metabolism; IMP biosynthesis via de novo pathway; 5-amino-1-(5-phospho-D-ribosyl)imidazole from N(2)-formyl-N(1)-(5-phospho-D-ribosyl)glycinamide: step 2/2. The polypeptide is Phosphoribosylformylglycinamidine cyclo-ligase (Streptococcus pneumoniae (strain P1031)).